A 336-amino-acid polypeptide reads, in one-letter code: Ferredoxin--NADP reductase 1 (336 aa).

The FAD site is built by Glu37, Lys45, Phe50, Val90, Leu125, Asp287, and Thr328.

This sequence belongs to the ferredoxin--NADP reductase type 2 family. Homodimer. FAD is required as a cofactor.

It carries out the reaction 2 reduced [2Fe-2S]-[ferredoxin] + NADP(+) + H(+) = 2 oxidized [2Fe-2S]-[ferredoxin] + NADPH. The protein is Ferredoxin--NADP reductase 1 (ycgT) of Bacillus subtilis (strain 168).